Consider the following 46-residue polypeptide: Protein PsbN (46 aa).

Residues 10–30 (VAIAVLAALLGLTGFGVYTAF) form a helical membrane-spanning segment.

It belongs to the PsbN family.

The protein resides in the cellular thylakoid membrane. In terms of biological role, may play a role in photosystem I and II biogenesis. In Synechococcus sp. (strain CC9311), this protein is Protein PsbN.